The following is a 246-amino-acid chain: tRNA (guanine-N(7)-)-methyltransferase (246 aa).

Glu-77, Glu-102, Asp-129, and Asp-152 together coordinate S-adenosyl-L-methionine. The active site involves Asp-152. Residues Lys-156, Asp-188, and 225 to 228 (TKFE) contribute to the substrate site.

The protein belongs to the class I-like SAM-binding methyltransferase superfamily. TrmB family.

It catalyses the reaction guanosine(46) in tRNA + S-adenosyl-L-methionine = N(7)-methylguanosine(46) in tRNA + S-adenosyl-L-homocysteine. The protein operates within tRNA modification; N(7)-methylguanine-tRNA biosynthesis. Functionally, catalyzes the formation of N(7)-methylguanine at position 46 (m7G46) in tRNA. This Haemophilus influenzae (strain 86-028NP) protein is tRNA (guanine-N(7)-)-methyltransferase.